A 465-amino-acid polypeptide reads, in one-letter code: ATP synthase subunit beta (465 aa).

Residue 148-155 (GGAGVGKT) coordinates ATP.

It belongs to the ATPase alpha/beta chains family. In terms of assembly, F-type ATPases have 2 components, CF(1) - the catalytic core - and CF(0) - the membrane proton channel. CF(1) has five subunits: alpha(3), beta(3), gamma(1), delta(1), epsilon(1). CF(0) has three main subunits: a(1), b(2) and c(9-12). The alpha and beta chains form an alternating ring which encloses part of the gamma chain. CF(1) is attached to CF(0) by a central stalk formed by the gamma and epsilon chains, while a peripheral stalk is formed by the delta and b chains.

It localises to the cell inner membrane. It catalyses the reaction ATP + H2O + 4 H(+)(in) = ADP + phosphate + 5 H(+)(out). Functionally, produces ATP from ADP in the presence of a proton gradient across the membrane. The catalytic sites are hosted primarily by the beta subunits. The protein is ATP synthase subunit beta of Neisseria meningitidis serogroup C (strain 053442).